The chain runs to 360 residues: Phospho-N-acetylmuramoyl-pentapeptide-transferase (360 aa).

Transmembrane regions (helical) follow at residues 25–45 (RTIY…PWLI), 73–93 (TMGG…WADL), 94–114 (TNAY…IGFV), 134–154 (FCLQ…GLNG), 173–193 (PGYV…VNLT), 198–218 (GLAI…AYVA), 240–260 (VFCG…AYPA), 262–282 (IFMG…VAIL), 287–307 (LALV…ILQV), and 337–357 (KVIV…VSTL).

Belongs to the glycosyltransferase 4 family. MraY subfamily. Mg(2+) is required as a cofactor.

It is found in the cell inner membrane. It carries out the reaction UDP-N-acetyl-alpha-D-muramoyl-L-alanyl-gamma-D-glutamyl-meso-2,6-diaminopimeloyl-D-alanyl-D-alanine + di-trans,octa-cis-undecaprenyl phosphate = di-trans,octa-cis-undecaprenyl diphospho-N-acetyl-alpha-D-muramoyl-L-alanyl-D-glutamyl-meso-2,6-diaminopimeloyl-D-alanyl-D-alanine + UMP. It functions in the pathway cell wall biogenesis; peptidoglycan biosynthesis. Its function is as follows. Catalyzes the initial step of the lipid cycle reactions in the biosynthesis of the cell wall peptidoglycan: transfers peptidoglycan precursor phospho-MurNAc-pentapeptide from UDP-MurNAc-pentapeptide onto the lipid carrier undecaprenyl phosphate, yielding undecaprenyl-pyrophosphoryl-MurNAc-pentapeptide, known as lipid I. This Desulfatibacillum aliphaticivorans protein is Phospho-N-acetylmuramoyl-pentapeptide-transferase.